The sequence spans 229 residues: Flagellar L-ring protein (229 aa).

The N-terminal stretch at 1-25 (MKQVRLLPSATVRAACAVAVAALAG) is a signal peptide. The N-palmitoyl cysteine moiety is linked to residue cysteine 26. Cysteine 26 carries S-diacylglycerol cysteine lipidation.

The protein belongs to the FlgH family. The basal body constitutes a major portion of the flagellar organelle and consists of four rings (L,P,S, and M) mounted on a central rod.

The protein localises to the cell outer membrane. Its subcellular location is the bacterial flagellum basal body. Assembles around the rod to form the L-ring and probably protects the motor/basal body from shearing forces during rotation. The sequence is that of Flagellar L-ring protein from Burkholderia vietnamiensis (strain G4 / LMG 22486) (Burkholderia cepacia (strain R1808)).